A 337-amino-acid polypeptide reads, in one-letter code: Inositol 2-dehydrogenase (337 aa).

The protein belongs to the Gfo/Idh/MocA family. Homotetramer.

It carries out the reaction myo-inositol + NAD(+) = scyllo-inosose + NADH + H(+). Involved in the oxidation of myo-inositol (MI) to 2-keto-myo-inositol (2KMI or 2-inosose). The sequence is that of Inositol 2-dehydrogenase from Gluconacetobacter diazotrophicus (strain ATCC 49037 / DSM 5601 / CCUG 37298 / CIP 103539 / LMG 7603 / PAl5).